Here is a 361-residue protein sequence, read N- to C-terminus: Chorismate synthase (361 aa).

The NADP(+) site is built by Arg48 and Arg54. FMN is bound by residues 125-127 (RSS), 238-239 (NA), Gly278, 293-297 (KPTSS), and Arg319.

This sequence belongs to the chorismate synthase family. In terms of assembly, homotetramer. Requires FMNH2 as cofactor.

The catalysed reaction is 5-O-(1-carboxyvinyl)-3-phosphoshikimate = chorismate + phosphate. Its pathway is metabolic intermediate biosynthesis; chorismate biosynthesis; chorismate from D-erythrose 4-phosphate and phosphoenolpyruvate: step 7/7. In terms of biological role, catalyzes the anti-1,4-elimination of the C-3 phosphate and the C-6 proR hydrogen from 5-enolpyruvylshikimate-3-phosphate (EPSP) to yield chorismate, which is the branch point compound that serves as the starting substrate for the three terminal pathways of aromatic amino acid biosynthesis. This reaction introduces a second double bond into the aromatic ring system. This is Chorismate synthase from Edwardsiella ictaluri (strain 93-146).